A 257-amino-acid chain; its full sequence is 7-carboxy-7-deazaguanine synthase (257 aa).

The interval 1–25 is disordered; it reads MKSVDHPVDVLPAEHSAETPGDARA. Residues 39–41 and Arg-54 each bind substrate; that span reads RQG. The 200-residue stretch at 45 to 244 folds into the Radical SAM core domain; it reads LTGTESVFIR…AISRGYQYCD (200 aa). [4Fe-4S] cluster contacts are provided by Cys-58, Cys-62, and Cys-65. Thr-67 lines the Mg(2+) pocket. A substrate-binding site is contributed by Thr-99. S-adenosyl-L-methionine contacts are provided by residues Gly-101 and 143–145; that span reads SPK.

It belongs to the radical SAM superfamily. 7-carboxy-7-deazaguanine synthase family. Homodimer. The cofactor is [4Fe-4S] cluster. S-adenosyl-L-methionine serves as cofactor. It depends on Mg(2+) as a cofactor.

The catalysed reaction is 6-carboxy-5,6,7,8-tetrahydropterin + H(+) = 7-carboxy-7-deazaguanine + NH4(+). The protein operates within purine metabolism; 7-cyano-7-deazaguanine biosynthesis. In terms of biological role, catalyzes the complex heterocyclic radical-mediated conversion of 6-carboxy-5,6,7,8-tetrahydropterin (CPH4) to 7-carboxy-7-deazaguanine (CDG), a step common to the biosynthetic pathways of all 7-deazapurine-containing compounds. This Rhodopirellula baltica (strain DSM 10527 / NCIMB 13988 / SH1) protein is 7-carboxy-7-deazaguanine synthase.